Reading from the N-terminus, the 225-residue chain is Large ribosomal subunit protein uL4 (225 aa).

The disordered stretch occupies residues 46–102; the sequence is KRQGTHATKGRGEVRGGGRKPFRQKGTGRARQGSIRAPHFTGGGTVHGPQPRDYSQR. Basic residues predominate over residues 62–73; sequence GGRKPFRQKGTG.

This sequence belongs to the universal ribosomal protein uL4 family. As to quaternary structure, part of the 50S ribosomal subunit.

Functionally, one of the primary rRNA binding proteins, this protein initially binds near the 5'-end of the 23S rRNA. It is important during the early stages of 50S assembly. It makes multiple contacts with different domains of the 23S rRNA in the assembled 50S subunit and ribosome. Its function is as follows. Forms part of the polypeptide exit tunnel. This Corynebacterium urealyticum (strain ATCC 43042 / DSM 7109) protein is Large ribosomal subunit protein uL4.